Here is a 315-residue protein sequence, read N- to C-terminus: Replication factor C small subunit (315 aa).

43–50 (GSPGVGKT) is an ATP binding site.

This sequence belongs to the activator 1 small subunits family. RfcS subfamily. Heteromultimer composed of small subunits (RfcS) and large subunits (RfcL).

Functionally, part of the RFC clamp loader complex which loads the PCNA sliding clamp onto DNA. The chain is Replication factor C small subunit from Methanococcus vannielii (strain ATCC 35089 / DSM 1224 / JCM 13029 / OCM 148 / SB).